We begin with the raw amino-acid sequence, 565 residues long: Carboxylesterase 1D (565 aa).

Positions 1 to 18 (MRLYPLVWLFLAACTAWG) are cleaved as a signal peptide. N-linked (GlcNAc...) asparagine glycosylation is present at Asn-79. A disulfide bridge links Cys-87 with Cys-116. Catalysis depends on Ser-221, which acts as the Acyl-ester intermediate. Cys-273 and Cys-284 form a disulfide bridge. The active-site Charge relay system is Glu-353. Lys-382 carries the N6-succinyllysine modification. The Charge relay system role is filled by His-466. Residue Asn-489 is glycosylated (N-linked (GlcNAc...) asparagine). Positions 562–565 (HVEL) match the Prevents secretion from ER motif.

This sequence belongs to the type-B carboxylesterase/lipase family. As to quaternary structure, homotrimer. Detected in liver, lung and testis, but not in kidney (at protein level).

It is found in the endoplasmic reticulum lumen. The protein localises to the cytoplasm. It localises to the cytosol. Its subcellular location is the lipid droplet. The protein resides in the microsome. The enzyme catalyses all-trans-retinyl hexadecanoate + H2O = all-trans-retinol + hexadecanoate + H(+). The catalysed reaction is a carboxylic ester + H2O = an alcohol + a carboxylate + H(+). It catalyses the reaction a long-chain fatty acyl ethyl ester + H2O = a long-chain fatty acid + ethanol + H(+). FAEE-synthesizing and PNPB-hydrolyzing activities are both inhibited by DFP. Its function is as follows. Major lipase in white adipose tissue. Involved in the metabolism of xenobiotics and of natural substrates. Hydrolyzes triacylglycerols and monoacylglycerols, with a preference for monoacylglycerols. The susceptibility of the substrate increases with decreasing acyl chain length of the fatty acid moiety. Catalyzes the synthesis of fatty acid ethyl esters. Hydrolyzes retinyl esters. This chain is Carboxylesterase 1D, found in Rattus norvegicus (Rat).